Reading from the N-terminus, the 465-residue chain is Na(+)-translocating NADH-quinone reductase subunit A (465 aa).

This sequence belongs to the NqrA family. In terms of assembly, composed of six subunits; NqrA, NqrB, NqrC, NqrD, NqrE and NqrF.

The enzyme catalyses a ubiquinone + n Na(+)(in) + NADH + H(+) = a ubiquinol + n Na(+)(out) + NAD(+). In terms of biological role, NQR complex catalyzes the reduction of ubiquinone-1 to ubiquinol by two successive reactions, coupled with the transport of Na(+) ions from the cytoplasm to the periplasm. NqrA to NqrE are probably involved in the second step, the conversion of ubisemiquinone to ubiquinol. The polypeptide is Na(+)-translocating NADH-quinone reductase subunit A (Chlamydia muridarum (strain MoPn / Nigg)).